The chain runs to 177 residues: tRNA (cytidine(56)-2'-O)-methyltransferase (177 aa).

Residues leucine 84 and 109–113 contribute to the S-adenosyl-L-methionine site; that span reads GAEKV.

The protein belongs to the aTrm56 family. Homodimer.

It localises to the cytoplasm. It carries out the reaction cytidine(56) in tRNA + S-adenosyl-L-methionine = 2'-O-methylcytidine(56) in tRNA + S-adenosyl-L-homocysteine + H(+). Specifically catalyzes the AdoMet-dependent 2'-O-ribose methylation of cytidine at position 56 in tRNAs. This chain is tRNA (cytidine(56)-2'-O)-methyltransferase, found in Methanosarcina mazei (strain ATCC BAA-159 / DSM 3647 / Goe1 / Go1 / JCM 11833 / OCM 88) (Methanosarcina frisia).